Reading from the N-terminus, the 624-residue chain is (-)-beta-phellandrene synthase 2, chloroplastic (624 aa).

A chloroplast-targeting transit peptide spans 1–48 (MAIVSSVPLASKSCLHKSLISSIHKLKPFCRTIPTLGMSRPGKYVMPS). Mg(2+) is bound by residues aspartate 375, aspartate 379, and aspartate 527. The DDXXD motif signature appears at 375–379 (DDMYD).

It belongs to the terpene synthase family. Tpsd subfamily. Mg(2+) serves as cofactor. It depends on Mn(2+) as a cofactor.

The protein localises to the plastid. It localises to the chloroplast. The catalysed reaction is (2E)-geranyl diphosphate = (-)-beta-phellandrene + diphosphate. Its pathway is terpene metabolism; oleoresin biosynthesis. Its function is as follows. Terpene synthase (TPS) involved in the biosynthesis of monoterpene natural products included in conifer oleoresin secretions and volatile emissions; these compounds contribute to biotic and abiotic stress defense against herbivores and pathogens. Catalyzes the conversion of (2E)-geranyl diphosphate (GPP) to (-)-beta-phellandrene. The sequence is that of (-)-beta-phellandrene synthase 2, chloroplastic from Picea sitchensis (Sitka spruce).